We begin with the raw amino-acid sequence, 408 residues long: UPF0761 membrane protein NMCC_0461 (408 aa).

The next 6 membrane-spanning stretches (helical) occupy residues 43-63 (LLAL…FPVF), 100-120 (LTAI…RTID), 139-159 (FLVY…GISF), 176-196 (WSGA…LWGL), 210-230 (AFVG…LFTW), and 248-268 (VPFF…GAVL).

It belongs to the UPF0761 family.

Its subcellular location is the cell inner membrane. The chain is UPF0761 membrane protein NMCC_0461 from Neisseria meningitidis serogroup C (strain 053442).